Here is a 70-residue protein sequence, read N- to C-terminus: Putative membrane protein insertion efficiency factor (70 aa).

The protein belongs to the UPF0161 family.

The protein resides in the cell inner membrane. In terms of biological role, could be involved in insertion of integral membrane proteins into the membrane. In Sphingopyxis alaskensis (strain DSM 13593 / LMG 18877 / RB2256) (Sphingomonas alaskensis), this protein is Putative membrane protein insertion efficiency factor.